The primary structure comprises 49 residues: DNA-directed RNA polymerase subunit Rpo12 (49 aa).

Zn(2+) is bound by residues cysteine 11, cysteine 27, and cysteine 30.

Belongs to the archaeal Rpo12/eukaryotic RPC10 RNA polymerase subunit family. Part of the RNA polymerase complex. Zn(2+) serves as cofactor.

It is found in the cytoplasm. The enzyme catalyses RNA(n) + a ribonucleoside 5'-triphosphate = RNA(n+1) + diphosphate. In terms of biological role, DNA-dependent RNA polymerase (RNAP) catalyzes the transcription of DNA into RNA using the four ribonucleoside triphosphates as substrates. This chain is DNA-directed RNA polymerase subunit Rpo12, found in Pyrococcus furiosus (strain ATCC 43587 / DSM 3638 / JCM 8422 / Vc1).